A 438-amino-acid chain; its full sequence is Phosphatidylserine decarboxylase proenzyme 1, mitochondrial (438 aa).

The transit peptide at 1–21 (MRRFRVWPPSPSPWPLLASRP) directs the protein to the mitochondrion. At 22-48 (CPHSHHHRSPFHASANSGARQGNFILP) the chain is on the mitochondrial matrix side. The chain crosses the membrane as a helical span at residues 49-67 (GATAATLVMFGILHARRMY). Residues 68–438 (EDQKVVERKE…EAIGRWTSRE (371 aa)) lie on the Mitochondrial intermembrane side of the membrane. Catalysis depends on charge relay system; for autoendoproteolytic cleavage activity residues Asp-173, His-273, and Ser-387. Residue Ser-387 is the Schiff-base intermediate with substrate; via pyruvic acid; for decarboxylase activity of the active site. A Pyruvic acid (Ser); by autocatalysis modification is found at Ser-387.

It belongs to the phosphatidylserine decarboxylase family. PSD-B subfamily. Eukaryotic type I sub-subfamily. In terms of assembly, heterodimer of a large membrane-associated beta subunit and a small pyruvoyl-containing alpha subunit. Pyruvate is required as a cofactor. Post-translationally, is synthesized initially as an inactive proenzyme. Formation of the active enzyme involves a self-maturation process in which the active site pyruvoyl group is generated from an internal serine residue via an autocatalytic post-translational modification. Two non-identical subunits are generated from the proenzyme in this reaction, and the pyruvate is formed at the N-terminus of the alpha chain, which is derived from the carboxyl end of the proenzyme. The autoendoproteolytic cleavage occurs by a canonical serine protease mechanism, in which the side chain hydroxyl group of the serine supplies its oxygen atom to form the C-terminus of the beta chain, while the remainder of the serine residue undergoes an oxidative deamination to produce ammonia and the pyruvoyl prosthetic group on the alpha chain. During this reaction, the Ser that is part of the protease active site of the proenzyme becomes the pyruvoyl prosthetic group, which constitutes an essential element of the active site of the mature decarboxylase.

It localises to the mitochondrion inner membrane. The catalysed reaction is a 1,2-diacyl-sn-glycero-3-phospho-L-serine + H(+) = a 1,2-diacyl-sn-glycero-3-phosphoethanolamine + CO2. Its pathway is phospholipid metabolism; phosphatidylethanolamine biosynthesis; phosphatidylethanolamine from CDP-diacylglycerol: step 2/2. Its function is as follows. Catalyzes the formation of phosphatidylethanolamine (PtdEtn) from phosphatidylserine (PtdSer). Plays a central role in phospholipid metabolism and in the interorganelle trafficking of phosphatidylserine. This chain is Phosphatidylserine decarboxylase proenzyme 1, mitochondrial (PSD1), found in Oryza sativa subsp. japonica (Rice).